A 96-amino-acid polypeptide reads, in one-letter code: Large ribosomal subunit protein uL23 (96 aa).

The protein belongs to the universal ribosomal protein uL23 family. As to quaternary structure, part of the 50S ribosomal subunit. Contacts protein L29, and trigger factor when it is bound to the ribosome.

In terms of biological role, one of the early assembly proteins it binds 23S rRNA. One of the proteins that surrounds the polypeptide exit tunnel on the outside of the ribosome. Forms the main docking site for trigger factor binding to the ribosome. In Bacillus cytotoxicus (strain DSM 22905 / CIP 110041 / 391-98 / NVH 391-98), this protein is Large ribosomal subunit protein uL23.